We begin with the raw amino-acid sequence, 586 residues long: Chaperone protein HscA homolog (586 aa).

It belongs to the heat shock protein 70 family.

Chaperone involved in the maturation of iron-sulfur cluster-containing proteins. Has a low intrinsic ATPase activity which is markedly stimulated by HscB. The protein is Chaperone protein HscA homolog of Rickettsia typhi (strain ATCC VR-144 / Wilmington).